A 493-amino-acid polypeptide reads, in one-letter code: MFKFALTQTLCLAGSLSLAQHNPHWWGNRNTIVHLFEWKWSDIAQECESFLGPRGFAGVQVSPVNENIIAAGRPWWERYQPISYKLTTRSGNEEEFGDMVRRCNDVGVRIYVDVLLNHMSGDFDGVAVGTAGTEAEPRKKSFPGVPYTAQDFHPTCEITDWNDRFQVQQCELVGLKDLDQSSDWVRSKLIEFLDHLIELGVAGFRVDAAKHMASEDLEYIYSSLSNLNIDHGFPHNSRPFIFQEVIDHGHETVSRDEYKDLGAVTEFRFSEEIGNAFRGNNALKWLQSWGTGWGFLPSGQALTFVDNHDNQRDAGAVLNYKSPRQYKMATAFHLAYPYGISRVMSSFAFDDHDTPPPQDAQERIISPEFDEDGACVNGWICEHRWRQIYAMVGFKNAVRDAEITGWWDNGDNQISFCRGNKGFLAFNNNLYDLSQDLNTCLPAGTYCDVISGSLIDGSCTGKSVTVNDNGYGYIHIGSDDFDGVLALHVDAKV.

The first 19 residues, 1–19 (MFKFALTQTLCLAGSLSLA), serve as a signal peptide directing secretion. At Gln20 the chain carries Pyrrolidone carboxylic acid. An intrachain disulfide couples Cys47 to Cys103. The Ca(2+) site is built by Asn117, Gln168, and Asp177. Cys156 and Cys170 form a disulfide bridge. Residue Arg205 coordinates chloride. Asp207 (nucleophile) is an active-site residue. His211 contributes to the Ca(2+) binding site. The active-site Proton donor is Glu244. Residues Asn307 and Arg342 each coordinate chloride. 3 cysteine pairs are disulfide-bonded: Cys375/Cys381, Cys417/Cys440, and Cys447/Cys459.

The protein belongs to the glycosyl hydrolase 13 family. Monomer. The cofactor is Ca(2+). It depends on chloride as a cofactor.

The protein localises to the secreted. The catalysed reaction is Endohydrolysis of (1-&gt;4)-alpha-D-glucosidic linkages in polysaccharides containing three or more (1-&gt;4)-alpha-linked D-glucose units.. This Drosophila mauritiana (Fruit fly) protein is Alpha-amylase-related protein (Amyrel).